Reading from the N-terminus, the 578-residue chain is Proline--tRNA ligase (578 aa).

This sequence belongs to the class-II aminoacyl-tRNA synthetase family. ProS type 1 subfamily. In terms of assembly, homodimer.

Its subcellular location is the cytoplasm. The catalysed reaction is tRNA(Pro) + L-proline + ATP = L-prolyl-tRNA(Pro) + AMP + diphosphate. In terms of biological role, catalyzes the attachment of proline to tRNA(Pro) in a two-step reaction: proline is first activated by ATP to form Pro-AMP and then transferred to the acceptor end of tRNA(Pro). As ProRS can inadvertently accommodate and process non-cognate amino acids such as alanine and cysteine, to avoid such errors it has two additional distinct editing activities against alanine. One activity is designated as 'pretransfer' editing and involves the tRNA(Pro)-independent hydrolysis of activated Ala-AMP. The other activity is designated 'posttransfer' editing and involves deacylation of mischarged Ala-tRNA(Pro). The misacylated Cys-tRNA(Pro) is not edited by ProRS. This Burkholderia ambifaria (strain MC40-6) protein is Proline--tRNA ligase.